Here is a 330-residue protein sequence, read N- to C-terminus: AH receptor-interacting protein (330 aa).

The PPIase FKBP-type domain occupies 31–121 (GTKATFHFRT…KDPLEGQRHC (91 aa)). Phosphoserine is present on Ser43. 3 TPR repeats span residues 179–212 (VPLI…LKNL), 231–264 (TPLL…YDDN), and 265–298 (VKAY…DPAL).

Interacts with RET in the pituitary gland; this interaction prevents the formation of the AIP-survivin complex.

It is found in the cytoplasm. Functionally, may play a positive role in AHR-mediated (aromatic hydrocarbon receptor) signaling, possibly by influencing its receptivity for ligand and/or its nuclear targeting. This is AH receptor-interacting protein (Aip) from Rattus norvegicus (Rat).